The sequence spans 122 residues: Small ribosomal subunit protein uS13 (122 aa).

The interval 94 to 122 (GLPVRGQVTQKNARTRKGPRKTVAGKKGK) is disordered. Residues 106-122 (ARTRKGPRKTVAGKKGK) are compositionally biased toward basic residues.

This sequence belongs to the universal ribosomal protein uS13 family. Part of the 30S ribosomal subunit. Forms a loose heterodimer with protein S19. Forms two bridges to the 50S subunit in the 70S ribosome.

Functionally, located at the top of the head of the 30S subunit, it contacts several helices of the 16S rRNA. In the 70S ribosome it contacts the 23S rRNA (bridge B1a) and protein L5 of the 50S subunit (bridge B1b), connecting the 2 subunits; these bridges are implicated in subunit movement. Contacts the tRNAs in the A and P-sites. In Mycoplasma mobile (strain ATCC 43663 / 163K / NCTC 11711) (Mesomycoplasma mobile), this protein is Small ribosomal subunit protein uS13.